A 47-amino-acid polypeptide reads, in one-letter code: Delta-ctenitoxin-Asp2e (47 aa).

Intrachain disulfides connect Cys3–Cys17, Cys10–Cys23, Cys14–Cys46, Cys16–Cys31, and Cys25–Cys29.

In terms of tissue distribution, expressed by the venom gland.

It is found in the secreted. Inhibits the inactivation of voltage-gated sodium channels (Nav). In Ancylometes sp. (South American fishing spider), this protein is Delta-ctenitoxin-Asp2e.